A 425-amino-acid polypeptide reads, in one-letter code: Histidine--tRNA ligase (425 aa).

It belongs to the class-II aminoacyl-tRNA synthetase family. In terms of assembly, homodimer.

The protein localises to the cytoplasm. It catalyses the reaction tRNA(His) + L-histidine + ATP = L-histidyl-tRNA(His) + AMP + diphosphate + H(+). The protein is Histidine--tRNA ligase of Histophilus somni (strain 129Pt) (Haemophilus somnus).